A 937-amino-acid polypeptide reads, in one-letter code: MAETLSGLGDASAAGAAAVSSAASETGTRRLSDLRVIDLRAELKKRNLDSSGNKSVLMERLKKAIEDEGGNPDEIEVTSECNKKMPKRPSKGRKPEDEGVEDNGLEENSGDGQEDVETSLENLQDMDMMDISVLDEADIDNGSVADCVEEEEEATLPEGLADSTELVEGDLKGLPEQLQEHAIDDKDTVNNVDTSSSDFTMLQEMEEASLEPENEKILDILGETCKSEPVKEEGSELEQPFAQATSSVGPDRKLAEEEDLFESCGHPEEEEEEEEEDQEEEQEEEGDLALASSSKSESPSTRCQWSEADAPLAVVKREPADAPGGGTGMDREPVGLEEPVEQSSTAAQLPEATSQELVRAPTAALSPEPQDSKEDVKKFAFDACNDVPAPPKESSASEGADQKMSSVEEDSDTKRLSREEKGRSSCGRNFWVSGLSSTTRATDLKNLFSRYGKVVGAKVVTNARSPGARCYGFVTMSTAEEATKCISHLHKTELHGKMISVEKAKSEPTGKRVPDRRDGDSKKEKASTSDRSANLKREEKGERKDDAKKTDDGSTEKSKDADDQKPGPSERSRTTKSGSRGTERTVVMDKSKGVPVISVKTSGSKERASKSQDRKSASREKRSVVSFDKVKESRKSRDSESRRERERSEREQRLQAQWEREERERLEIARERLAFHRHRLERERMERERLERERMHVEQERRREQERIHREREELRRQQELRYEQERRPAVRRPYEVDGRRDDAYWPEAKRAALDDRYHSDFSRQDRFHDFDHRDRGRYPNHSVDRREGSRSMMGDREGQHYPERHGGPERHGRDSRDGWGYGSNKRLSEGRGLPPPPRRDWGEHGRRLEDDRAWQGTADGGMMERDHKRWQGGERSMSGHSGPGHMMNRGGMSGRGSFAPGGASRGHVIPRGGMQAGFGGQSRGSRPSDARFTRRY.

The disordered stretch occupies residues 1-35; sequence MAETLSGLGDASAAGAAAVSSAASETGTRRLSDLR. Ala2 is subject to N-acetylalanine. Low complexity predominate over residues 11-24; it reads ASAAGAAAVSSAAS. Residues Ser24 and Ser55 each carry the phosphoserine modification. Positions 31–65 constitute an SAP domain; it reads LSDLRVIDLRAELKKRNLDSSGNKSVLMERLKKAI. The interval 64–117 is disordered; the sequence is AIEDEGGNPDEIEVTSECNKKMPKRPSKGRKPEDEGVEDNGLEENSGDGQEDVE. A compositionally biased stretch (acidic residues) spans 67-77; that stretch reads DEGGNPDEIEV. Ser79 is modified (phosphoserine). Over residues 98–117 the composition is skewed to acidic residues; sequence EGVEDNGLEENSGDGQEDVE. Residues Lys172 and Lys186 each participate in a glycyl lysine isopeptide (Lys-Gly) (interchain with G-Cter in SUMO2) cross-link. At Thr188 the chain carries Phosphothreonine. A phosphoserine mark is found at Ser195, Ser197, and Ser209. Residues 222 to 429 form a disordered region; sequence GETCKSEPVK…EKGRSSCGRN (208 aa). Residues 225–234 show a composition bias toward basic and acidic residues; it reads CKSEPVKEEG. Lys231 is covalently cross-linked (Glycyl lysine isopeptide (Lys-Gly) (interchain with G-Cter in SUMO)). The segment covering 268–287 has biased composition (acidic residues); that stretch reads EEEEEEEEEDQEEEQEEEGD. Residue Lys316 forms a Glycyl lysine isopeptide (Lys-Gly) (interchain with G-Cter in SUMO) linkage. The span at 341 to 356 shows a compositional bias: polar residues; it reads EQSSTAAQLPEATSQE. A compositionally biased stretch (basic and acidic residues) spans 370–380; it reads QDSKEDVKKFA. Lys403 is covalently cross-linked (Glycyl lysine isopeptide (Lys-Gly) (interchain with G-Cter in SUMO2)). 2 positions are modified to phosphoserine: Ser405 and Ser406. Residues 412–423 show a composition bias toward basic and acidic residues; sequence DTKRLSREEKGR. Lys414 is covalently cross-linked (Glycyl lysine isopeptide (Lys-Gly) (interchain with G-Cter in SUMO2)). The RRM domain occupies 428–506; that stretch reads RNFWVSGLSS…KMISVEKAKS (79 aa). Phosphoserine is present on Ser437. Composition is skewed to basic and acidic residues over residues 499–573 and 581–592; these read ISVE…ERSR and GTERTVVMDKSK. Disordered regions lie at residues 499 to 661, 684 to 738, and 771 to 937; these read ISVE…WERE, RMER…YEVD, and FDHR…TRRY. Glycyl lysine isopeptide (Lys-Gly) (interchain with G-Cter in SUMO2) cross-links involve residues Lys505, Lys536, Lys565, and Lys592. The segment at 550–814 is interaction with POLR2A; SFRS1; SFRS9 and SFRS10; it reads TDDGSTEKSK…RHGGPERHGR (265 aa). Lys600 participates in a covalent cross-link: Glycyl lysine isopeptide (Lys-Gly) (interchain with G-Cter in SUMO1); alternate. Lys600 is covalently cross-linked (Glycyl lysine isopeptide (Lys-Gly) (interchain with G-Cter in SUMO2); alternate). Ser602, Ser604, Ser623, and Ser626 each carry phosphoserine. The segment covering 603–661 has biased composition (basic and acidic residues); the sequence is GSKERASKSQDRKSASREKRSVVSFDKVKESRKSRDSESRRERERSEREQRLQAQWERE. The Nuclear localization signal signature appears at 621-638; sequence KRSVVSFDKVKESRKSRD. The interaction with SAFB2 stretch occupies residues 621-937; the sequence is KRSVVSFDKV…PSDARFTRRY (317 aa). Lys629 bears the N6-acetyllysine mark. Residues 652–726 are a coiled coil; that stretch reads QRLQAQWERE…RQQELRYEQE (75 aa). The span at 771 to 818 shows a compositional bias: basic and acidic residues; the sequence is FDHRDRGRYPNHSVDRREGSRSMMGDREGQHYPERHGGPERHGRDSRD. The residue at position 832 (Arg832) is an Omega-N-methylarginine. 2 stretches are compositionally biased toward basic and acidic residues: residues 838–854 and 863–873; these read PRRDWGEHGRRLEDDRA and MMERDHKRWQG. Residue Lys869 forms a Glycyl lysine isopeptide (Lys-Gly) (interchain with G-Cter in SUMO2) linkage. Asymmetric dimethylarginine occurs at positions 890, 896, 906, and 912. Residues 927 to 937 are compositionally biased toward basic and acidic residues; the sequence is RPSDARFTRRY.

As to quaternary structure, monomer and homodimer. Forms heterodimers with SAFB2. Interacts with KHDRBS3. Interacts with CLK2. Interacts with POLR2A, ASF/SRSF1, SRp30c/SRFS9 and TRA2B/SFRS10. Interacts with SRPK1 and inhibits its activity. Interacts with RBMX. Interacts with FUS. Interacts with ZBED4. In terms of processing, sumoylated by PIAS1 with SUMO1 and SUMO2/3, desumoylated by SENP1. Sumoylation is required for transcriptional repressor activity.

Its subcellular location is the nucleus. Functionally, binds to scaffold/matrix attachment region (S/MAR) DNA and forms a molecular assembly point to allow the formation of a 'transcriptosomal' complex (consisting of SR proteins and RNA polymerase II) coupling transcription and RNA processing. Functions as an estrogen receptor corepressor and can also bind to the HSP27 promoter and decrease its transcription. Thereby acts as a negative regulator of cell proliferation. When associated with RBMX, binds to and stimulates transcription from the SREBF1 promoter. The protein is Scaffold attachment factor B1 (Safb) of Mus musculus (Mouse).